A 159-amino-acid polypeptide reads, in one-letter code: MSFRIGHGYDVHKFTSAKQNIIIGGVEIAYHLGLEAHSDGDVLIHALCDAILGALGLGDIGKHFLDTDNQFKNIDSKFFLAEIKKMLDKKQYSISNIDCTIIAQAPKMLPHIEKMRACLANILEIQISQINIKATTTERLGFIGREEGIATHVVCLLYR.

Residues aspartate 10 and histidine 12 each coordinate a divalent metal cation. 4-CDP-2-C-methyl-D-erythritol 2-phosphate-binding positions include 10–12 and 37–38; these read DVH and HS. Histidine 45 serves as a coordination point for a divalent metal cation. Residues 59–61, 64–68, 103–109, 135–138, phenylalanine 142, and arginine 145 contribute to the 4-CDP-2-C-methyl-D-erythritol 2-phosphate site; these read DIG, FLDTD, AQAPKML, and TTTE.

It belongs to the IspF family. In terms of assembly, homotrimer. The cofactor is a divalent metal cation.

The catalysed reaction is 4-CDP-2-C-methyl-D-erythritol 2-phosphate = 2-C-methyl-D-erythritol 2,4-cyclic diphosphate + CMP. Its pathway is isoprenoid biosynthesis; isopentenyl diphosphate biosynthesis via DXP pathway; isopentenyl diphosphate from 1-deoxy-D-xylulose 5-phosphate: step 4/6. In terms of biological role, involved in the biosynthesis of isopentenyl diphosphate (IPP) and dimethylallyl diphosphate (DMAPP), two major building blocks of isoprenoid compounds. Catalyzes the conversion of 4-diphosphocytidyl-2-C-methyl-D-erythritol 2-phosphate (CDP-ME2P) to 2-C-methyl-D-erythritol 2,4-cyclodiphosphate (ME-CPP) with a corresponding release of cytidine 5-monophosphate (CMP). This Francisella tularensis subsp. tularensis (strain FSC 198) protein is 2-C-methyl-D-erythritol 2,4-cyclodiphosphate synthase.